We begin with the raw amino-acid sequence, 206 residues long: Ribosomal RNA small subunit methyltransferase G (206 aa).

S-adenosyl-L-methionine is bound by residues Gly71, Phe76, 122-123 (AE), and Arg135.

This sequence belongs to the methyltransferase superfamily. RNA methyltransferase RsmG family.

The protein resides in the cytoplasm. Functionally, specifically methylates the N7 position of a guanine in 16S rRNA. This is Ribosomal RNA small subunit methyltransferase G from Bacteroides fragilis (strain ATCC 25285 / DSM 2151 / CCUG 4856 / JCM 11019 / LMG 10263 / NCTC 9343 / Onslow / VPI 2553 / EN-2).